Reading from the N-terminus, the 4128-residue chain is DNA-dependent protein kinase catalytic subunit (4128 aa).

At Lys117 the chain carries N6-acetyllysine. The HEAT 1 repeat unit spans residues 288–323 (DNYITLFEVLSKWCSHTNVELKKAAHSALESFLRQI). Phosphoserine occurs at positions 511, 686, 840, and 891. HEAT repeat units lie at residues 1001–1037 (QDTVALLEAILDGIVDPVDSTLRDFCGRCVQEFLKWS) and 1050–1086 (PVNSKSLFKRLYSLALHPNAFKRLGAALAFNHIYKEF). Ser1062 is subject to Phosphoserine. Lys1206 carries the N6-acetyllysine modification. The interval 1501 to 1536 (LDPSCKSLANGLLELAFGFGGLCDHLVSLLLNSAML) is interaction with C1D. Residues 1501 to 1536 (LDPSCKSLANGLLELAFGFGGLCDHLVSLLLNSAML) form a leucine-zipper region. Residues 1720-1753 (PMKSDEFPPDSLKYNNYVDCMKKFLDALELSQSP) form a TPR 1 repeat. Residue Lys1967 is modified to N6-acetyllysine. Positions 2049-2071 (YSYSSQDRKPTTGHFQRREHQDS) are disordered. Ser2053 bears the Phosphoserine; by autocatalysis mark. The span at 2054–2070 (QDRKPTTGHFQRREHQD) shows a compositional bias: basic and acidic residues. The residue at position 2255 (Lys2255) is an N6-acetyllysine. A KIP-binding region spans residues 2432 to 3213 (LDIVYKMVAK…DHSMSVDEDE (782 aa)). A Phosphothreonine modification is found at Thr2531. At Thr2605 the chain carries Phosphothreonine; by autocatalysis. Ser2608 is subject to Phosphoserine; by autocatalysis. The tract at residues 2614-2635 (TQTQEGPLSDQRQKPGQVRATQ) is disordered. Thr2634 and Thr2643 each carry phosphothreonine; by autocatalysis. Residues 2738 to 2766 (EKLSLLYAKRGLMEQKLEKDIKSEFKMKQ) are may split the end of the DNA molecule, with the two strands separating around the region. One can recognise an FAT domain in the interval 2907-3539 (PTKRVRGKTC…IYPFIISSES (633 aa)). TPR repeat units follow at residues 2921-2954 (VLRWMELAKLYRSIGEYDVLRGIFSSELGTTQDT) and 2956-2983 (NALLAEARSDYCQAAKLYDEALNKLEWV). The residue at position 3206 (Ser3206) is a Phosphoserine. An N6-acetyllysine mark is found at Lys3241, Lys3260, Lys3638, and Lys3642. Residues 3722–4053 (FDERVKVMLS…IRYAKRKLAG (332 aa)) enclose the PI3K/PI4K catalytic domain. The tract at residues 3728–3734 (VMLSLRK) is G-loop. A phosphoserine mark is found at Ser3731 and Ser3821. Residues 3919-3927 (GIGDRHLNN) form a catalytic loop region. An activation loop region spans residues 3939–3964 (GIDFGHAFGSATQFLPVPELMPFRLT). Phosphoserine is present on Ser4026. One can recognise an FATC domain in the interval 4096-4128 (SGLSEETQVKCLVDQATDPNILGRTWEGWEPWM).

The protein belongs to the PI3/PI4-kinase family. DNA-PK is a heterotrimer of PRKDC and the Ku dimer (composed of XRCC6/Ku70 and XRCC5/Ku86). Formation of this complex may be promoted by interaction with ILF3. Component of the core long-range non-homologous end joining (NHEJ) complex (also named DNA-PK complex) composed of PRKDC, LIG4, XRCC4, XRCC6/Ku70, XRCC5/Ku86 and NHEJ1/XLF. Additional component of the NHEJ complex includes PAXX. Following autophosphorylation, PRKDC dissociates from DNA. Interacts with DNA-PKcs-interacting protein (KIP) with the region upstream the kinase domain. PRKDC alone also interacts with and phosphorylates DCLRE1C, thereby activating the latent endonuclease activity of this protein. Interacts with C1D. Interacts with TTI1 and TELO2. Interacts with CIB1. Interacts with SETX. Interacts with NR4A3; the DNA-dependent protein kinase complex DNA-PK phosphorylates and activates NR4A3 and prevents NR4A3 ubiquitination and degradation. Interacts with BRAT1. Part of the HDP-RNP complex composed of at least HEXIM1, PRKDC, XRCC5, XRCC6, paraspeckle proteins (SFPQ, NONO, PSPC1, RBM14, and MATR3) and NEAT1 RNA. Interacts with KAT5. In terms of processing, autophosphorylated at two clusters, the T2609 cluster and the S2056 cluster. Autophosphorylated on Ser-2053, Thr-2605, Thr-2634 and Thr-2643. Ser-2053 and Thr-2605 are DNA damage-inducible phosphorylation sites (inducible with ionizing radiation, IR) dephosphorylated by PPP5C. Autophosphorylation induces a conformational change that leads to remodeling of the DNA-PK complex, requisite for efficient end processing and DNA repair. Autophosphorylation in trans within DNA-PK complexes loaded on DNA ends leads to the dissociation of PRKDC from DNA and the transition into the short-range NHEJ complex. Autophosphorylation of the T2609 cluster is required for hematopoietic development and protein synthesis in erythrocytes precursors. Post-translationally, S-nitrosylated by GAPDH. Polyubiquitinated by RNF144A, leading to proteasomal degradation.

The protein localises to the nucleus. The protein resides in the nucleolus. It is found in the cytoplasm. Its subcellular location is the cytosol. The enzyme catalyses L-seryl-[protein] + ATP = O-phospho-L-seryl-[protein] + ADP + H(+). The catalysed reaction is L-threonyl-[protein] + ATP = O-phospho-L-threonyl-[protein] + ADP + H(+). Activity seems to be attenuated by autophosphorylation. Binding to the SL1 region of U3 small nucleolar RNA promotes auto-phosphorylation activity. Inhibited by wortmannin. Functionally, serine/threonine-protein kinase that acts as a molecular sensor for DNA damage. Involved in DNA non-homologous end joining (NHEJ) required for double-strand break (DSB) repair and V(D)J recombination. Must be bound to DNA to express its catalytic properties. Promotes processing of hairpin DNA structures in V(D)J recombination by activation of the hairpin endonuclease artemis (DCLRE1C). Recruited by XRCC5 and XRCC6 to DNA ends and is required to (1) protect and align broken ends of DNA, thereby preventing their degradation, (2) and sequester the DSB for repair by NHEJ. Acts as a scaffold protein to aid the localization of DNA repair proteins to the site of damage. The assembly of the DNA-PK complex at DNA ends is also required for the NHEJ ligation step. Found at the ends of chromosomes, suggesting a further role in the maintenance of telomeric stability and the prevention of chromosomal end fusion. Also involved in modulation of transcription. As part of the DNA-PK complex, involved in the early steps of ribosome assembly by promoting the processing of precursor rRNA into mature 18S rRNA in the small-subunit processome. Binding to U3 small nucleolar RNA, recruits PRKDC and XRCC5/Ku86 to the small-subunit processome. Recognizes the substrate consensus sequence [ST]-Q. Phosphorylates 'Ser-139' of histone variant H2AX, thereby regulating DNA damage response mechanism. Phosphorylates ASF1A, DCLRE1C, c-Abl/ABL1, histone H1, HSPCA, c-jun/JUN, p53/TP53, PARP1, POU2F1, DHX9, FH, SRF, NHEJ1/XLF, XRCC1, XRCC4, XRCC5, XRCC6, WRN, MYC and RFA2. Can phosphorylate C1D not only in the presence of linear DNA but also in the presence of supercoiled DNA. Ability to phosphorylate p53/TP53 in the presence of supercoiled DNA is dependent on C1D. Acts as a regulator of the phosphatidylinositol 3-kinase/protein kinase B signal transduction by mediating phosphorylation of 'Ser-473' of protein kinase B (PKB/AKT1, PKB/AKT2, PKB/AKT3), promoting their activation. Contributes to the determination of the circadian period length by antagonizing phosphorylation of CRY1 'Ser-588' and increasing CRY1 protein stability, most likely through an indirect mechanism. Plays a role in the regulation of DNA virus-mediated innate immune response by assembling into the HDP-RNP complex, a complex that serves as a platform for IRF3 phosphorylation and subsequent innate immune response activation through the cGAS-STING pathway. Also regulates the cGAS-STING pathway by catalyzing phosphorylation of CGAS, thereby impairing CGAS oligomerization and activation. Also regulates the cGAS-STING pathway by mediating phosphorylation of PARP1. The protein is DNA-dependent protein kinase catalytic subunit (Prkdc) of Mus musculus (Mouse).